Here is a 532-residue protein sequence, read N- to C-terminus: Copalyl diphosphate synthase (532 aa).

Positions Asp313–Ala318 match the DXDDTA motif motif. A QXXDGSW motif motif is present at residues Gln443–Trp449.

It belongs to the terpene synthase family. It depends on Mg(2+) as a cofactor.

The enzyme catalyses (2E,6E,10E)-geranylgeranyl diphosphate = (+)-copalyl diphosphate. Its function is as follows. Involved in the biosynthesis of the mercapturic acid derivative diterpene cyslabdan A, a potentiator of the beta-lactam antibiotic imipenem. Catalyzes the conversion of geranylgeranyl diphosphate (GGDP) into (+)-copalyl diphosphate. In Streptomyces cyslabdanicus, this protein is Copalyl diphosphate synthase.